A 98-amino-acid chain; its full sequence is MSVVYINIFLAFILSFMGLLVYRSHLMSSLLCLEGMMLSLFVMMTITVLTNHFTLASMTPIILLVFAACEAALGLSLLVMISNTYGTDYVQNLNLLQC.

3 consecutive transmembrane segments (helical) span residues 1-21 (MSVVYINIFLAFILSFMGLLV), 30-50 (LLCLEGMMLSLFVMMTITVLT), and 61-81 (IILLVFAACEAALGLSLLVMI).

The protein belongs to the complex I subunit 4L family. Core subunit of respiratory chain NADH dehydrogenase (Complex I) which is composed of 45 different subunits.

The protein resides in the mitochondrion inner membrane. The catalysed reaction is a ubiquinone + NADH + 5 H(+)(in) = a ubiquinol + NAD(+) + 4 H(+)(out). In terms of biological role, core subunit of the mitochondrial membrane respiratory chain NADH dehydrogenase (Complex I) which catalyzes electron transfer from NADH through the respiratory chain, using ubiquinone as an electron acceptor. Part of the enzyme membrane arm which is embedded in the lipid bilayer and involved in proton translocation. The sequence is that of NADH-ubiquinone oxidoreductase chain 4L (MT-ND4L) from Lontra canadensis (North American river otter).